Reading from the N-terminus, the 68-residue chain is Negative regulator of P-body association (68 aa).

Residues 1 to 68 form a disordered region; that stretch reads MGDQPCASGR…LKSHPPPPEK (68 aa).

As to quaternary structure, interacts with mRNA decapping proteins DCP1A, DCP2 and EDC4.

It is found in the cytoplasm. The protein resides in the P-body. Functionally, promotes dispersal of P-body components and is likely to play a role in the mRNA decapping process. The polypeptide is Negative regulator of P-body association (Homo sapiens (Human)).